The sequence spans 651 residues: Probable potassium transport system protein Kup 3 (651 aa).

Helical transmembrane passes span 38–58, 77–97, 129–149, 166–186, 197–217, 242–262, 276–296, 314–334, 366–386, 396–416, 421–441, and 448–468; these read FWALTLGGIGVVFGDIGTSPL, VLVLGVLSLILWALLIVVTAK, LFLLVLGVIGASMFIGDSMIT, PALEHYVVPLTVLVLVLLFGV, FFGPVMLVWFATLAAMGAMHI, IGLVTLGAVFLAVTGGEALYA, WLGFVLPALLINYFGQGALVL, LVLPLTLMATAATVIASQAVI, IYLPRVNALLLIGVLLLVLLF, YGIAVSTTMVVDGIMGFVVIW, WSWPAAALVILPLVLVDAMFF, and LLDGAWVPLLFGLAMAVVIWT.

The protein belongs to the HAK/KUP transporter (TC 2.A.72) family.

Its subcellular location is the cell inner membrane. It carries out the reaction K(+)(in) + H(+)(in) = K(+)(out) + H(+)(out). Functionally, transport of potassium into the cell. Likely operates as a K(+):H(+) symporter. The polypeptide is Probable potassium transport system protein Kup 3 (Rhodopseudomonas palustris (strain ATCC BAA-98 / CGA009)).